Here is a 299-residue protein sequence, read N- to C-terminus: Oxygen-dependent coproporphyrinogen-III oxidase (299 aa).

Substrate is bound at residue Ser92. Residues His96 and His106 each contribute to the a divalent metal cation site. The active-site Proton donor is the His106. 108-110 is a substrate binding site; sequence NVR. A divalent metal cation is bound by residues His145 and His175. The segment at 240–275 is important for dimerization; it reads YVEFNLVWDRGTLFGLQTGGRTESILMSMPPLVRWE. 258–260 serves as a coordination point for substrate; that stretch reads GGR.

It belongs to the aerobic coproporphyrinogen-III oxidase family. In terms of assembly, homodimer. A divalent metal cation serves as cofactor.

The protein localises to the cytoplasm. It carries out the reaction coproporphyrinogen III + O2 + 2 H(+) = protoporphyrinogen IX + 2 CO2 + 2 H2O. The protein operates within porphyrin-containing compound metabolism; protoporphyrin-IX biosynthesis; protoporphyrinogen-IX from coproporphyrinogen-III (O2 route): step 1/1. Its function is as follows. Involved in the heme biosynthesis. Catalyzes the aerobic oxidative decarboxylation of propionate groups of rings A and B of coproporphyrinogen-III to yield the vinyl groups in protoporphyrinogen-IX. The chain is Oxygen-dependent coproporphyrinogen-III oxidase from Salmonella paratyphi B (strain ATCC BAA-1250 / SPB7).